Reading from the N-terminus, the 977-residue chain is Probable UDP-N-acetylglucosamine--peptide N-acetylglucosaminyltransferase SEC (977 aa).

14 TPR repeats span residues 2-35 (ISSKNGAAMISRPVFLSDRVDEVFSRKLDLSVSS), 53-86 (DDARLALAHQLYKGGDFKQALEHSNMVYQRNPLR), 87-120 (TDNLLLIGAIYYQLQEYDMCIARNEEALRIQPQF), 121-154 (AECYGNMANAWKEKGDTDRAIRYYLIAIELRPNF), 155-188 (ADAWSNLASAYMRKGRLSEATQCCQQALSLNPLL), 189-222 (VDAHSNLGNLMKAQGLIHEAYSCYLEAVRIQPTF), 223-256 (AIAWSNLAGLFMESGDLNRALQYYKEAVKLKPAF), 257-290 (PDAYLNLGNVYKALGRPTEAIMCYQHALQMRPNS), 291-324 (AMAFGNIASIYYEQGQLDLAIRHYKQALSRDPRF), 325-358 (LEAYNNLGNALKDIGRVDEAVRCYNQCLALQPNH), 359-392 (PQAMANLGNIYMEWNMMGPASSLFKATLAVTTGL), 393-426 (SAPFNNLAIIYKQQGNYSDAISCYNEVLRIDPLA), 427-460 (ADALVNRGNTYKEIGRVTEAIQDYMHAINFRPTM), and 461-494 (AEAHANLASAYKDSGHVEAAITSYKQALLLRPDF). Residues 495 to 977 (PEATCNLLHT…ENDLEFPHDR (483 aa)) are catalytic region.

Belongs to the glycosyltransferase 41 family. O-GlcNAc transferase subfamily. In terms of assembly, interacts with TCP14 and TCP15. Interacts with ATX1.

The enzyme catalyses L-seryl-[protein] + UDP-N-acetyl-alpha-D-glucosamine = 3-O-(N-acetyl-beta-D-glucosaminyl)-L-seryl-[protein] + UDP + H(+). The catalysed reaction is L-threonyl-[protein] + UDP-N-acetyl-alpha-D-glucosamine = 3-O-(N-acetyl-beta-D-glucosaminyl)-L-threonyl-[protein] + UDP + H(+). It functions in the pathway protein modification; protein glycosylation. Functionally, O-linked N-acetylglucosamine transferase (OGT) that mediates O-glycosylation of capsid protein (CP) of virus in case of infection by Plum pox virus. OGTs catalyze the addition of nucleotide-activated sugars directly onto the polypeptide through O-glycosidic linkage with the hydroxyl of serine or threonine. Probably acts by adding O-linked sugars to yet unknown proteins. Its OGT activity has been proved in vitro but not in vivo. Required with SPY for gamete and seed development. Mediates O-glycosylation of the DELLA protein RGA, a repressor of the gibberellin (GA) signaling pathway. O-glycosylation by SEC inhibits RGA binding to four of its interactors PIF3, PIF4, JAZ1, and BZR1 that are key regulators in light, jasmonate, and brassinosteroid signaling pathways, respectively. Activates ATX1 through O-GlcNAc modification to augment ATX1-mediated H3K4me3 histone epigenetic modification at FLC locus, thus preventing premature flowering. The sequence is that of Probable UDP-N-acetylglucosamine--peptide N-acetylglucosaminyltransferase SEC from Arabidopsis thaliana (Mouse-ear cress).